We begin with the raw amino-acid sequence, 216 residues long: Phosducin-like protein 3 (216 aa).

Residues 13–59 (AKTIEQQLDQQLDRLDNLDSDDLKVLREQRLREMKDLNNKKQEWLRN) are a coiled coil. One can recognise a Phosducin domain in the interval 29-163 (NLDSDDLKVL…DLGNCDDFAT (135 aa)).

The protein belongs to the phosducin family. In terms of tissue distribution, highly expressed in germline cells of the testis from the spermatogonia stage until the early spermatid stage but is no longer observed in late-stage spermatids in the distal end of the testis.

It carries out the reaction [thioredoxin]-dithiol + NADP(+) = [thioredoxin]-disulfide + NADPH + H(+). Has redox activity with thioredoxin. Required for male fertility and maturation of sperm past the canoe stage during spermiogenesis. This chain is Phosducin-like protein 3, found in Drosophila melanogaster (Fruit fly).